A 255-amino-acid polypeptide reads, in one-letter code: Pimeloyl-[acyl-carrier protein] methyl ester esterase (255 aa).

Residues tryptophan 18, 78–79 (SL), and 139–143 (FLALD) each bind substrate. Catalysis depends on serine 78, which acts as the Nucleophile. Active-site residues include aspartate 203 and histidine 233. Substrate is bound at residue histidine 233.

The protein belongs to the AB hydrolase superfamily. Carboxylesterase BioH family. In terms of assembly, monomer.

It is found in the cytoplasm. It catalyses the reaction 6-carboxyhexanoyl-[ACP] methyl ester + H2O = 6-carboxyhexanoyl-[ACP] + methanol + H(+). Its pathway is cofactor biosynthesis; biotin biosynthesis. In terms of biological role, the physiological role of BioH is to remove the methyl group introduced by BioC when the pimeloyl moiety is complete. It allows to synthesize pimeloyl-ACP via the fatty acid synthetic pathway through the hydrolysis of the ester bonds of pimeloyl-ACP esters. The sequence is that of Pimeloyl-[acyl-carrier protein] methyl ester esterase from Xylella fastidiosa (strain 9a5c).